A 951-amino-acid chain; its full sequence is WD repeat-containing and planar cell polarity effector protein fritz (951 aa).

WD repeat units follow at residues 304–343 (PMGAQICSFAFSPDQEKLFLGSVDRNICLHDLVQQSTKYA) and 345–384 (QIEIVPNQCAWHCDSAMLCVANERSVLQCFDLALATIGHQ). Polar residues-rich tracts occupy residues 709-720 (TLKSNSSLQQAP), 757-771 (IPDQSAQLGQFSTMP), and 818-828 (SILSNPANPAP). 3 disordered regions span residues 709 to 776 (TLKS…SPPP), 816 to 883 (TASI…AARH), and 903 to 951 (EYLK…FGVV). The span at 930–942 (SSKGGNSSSSSSS) shows a compositional bias: low complexity.

Belongs to the WD repeat fritz family.

It localises to the cell membrane. It is found in the cytoplasm. The protein resides in the cytoskeleton. The protein localises to the cilium axoneme. Probable effector of the planar cell polarity signaling pathway which regulates the septin cytoskeleton in both ciliogenesis and collective cell movements. Functions cell autonomously to regulate wing cell hair polarity and number. This Drosophila melanogaster (Fruit fly) protein is WD repeat-containing and planar cell polarity effector protein fritz (frtz).